We begin with the raw amino-acid sequence, 635 residues long: MMQMSDKFNYEELGLKVGLEIHRQLDTKKLFSPVPTKFSDEVDFTFQRRLRPTMSELGEVDPAALEEFKKGRVFIYEGNYQLTDLVYMDEEPPRGPDKEALEVALQIAYLLNAKPVDEVYYMRKIVIDGSNVSGFQRTAIIATDGKVETPWGTVGIPTICLEEDAARIIERKEKEVIYRLDRLGVPLVEISTTPDIHHPEQAKVVAKFIGDALRATRKVKRGLGTIRQDLNVSIKGGARIEIKGVQELDMIPLIIEREVERQLNLLKIRDELQRRGVRPEDIKEEFYDVTDVFTNTKSKIIARAIKKGGKVLAIKLPKFRGLIGREIQPGRRLGTEFADRARKYVPGIFHIDELPNYGITQEEVNEVIKRLGLGEEDAFVLVAAEEERAKNALREVIKRAKEAIIGVPEETRRALPDGNTEYMRPLPGKARMYPETDIPPIRIPDELKRKIKENLPELPQVKVEKYVREYKLDRSLAQTLVDDERDELFEELVQMGVKPSLAASILVVVLKGLRKEVPIENISDEHIKEAFSLYLEGKIAKEAFEEIFKEIARNPNKTARQIAEEKGLTLLSEDEVRKIIDEVIEQNIEVVKNKGMGAMGLIMGRVMAKVRGKADGKLVSQIVKKRLQEIVGGGV.

Positions 415–437 (LPDGNTEYMRPLPGKARMYPETD) are disordered.

It belongs to the GatB/GatE family. GatE subfamily. As to quaternary structure, heterodimer of GatD and GatE.

It carries out the reaction L-glutamyl-tRNA(Gln) + L-glutamine + ATP + H2O = L-glutaminyl-tRNA(Gln) + L-glutamate + ADP + phosphate + H(+). Functionally, allows the formation of correctly charged Gln-tRNA(Gln) through the transamidation of misacylated Glu-tRNA(Gln) in organisms which lack glutaminyl-tRNA synthetase. The reaction takes place in the presence of glutamine and ATP through an activated gamma-phospho-Glu-tRNA(Gln). The GatDE system is specific for glutamate and does not act on aspartate. The sequence is that of Glutamyl-tRNA(Gln) amidotransferase subunit E from Pyrococcus horikoshii (strain ATCC 700860 / DSM 12428 / JCM 9974 / NBRC 100139 / OT-3).